A 139-amino-acid chain; its full sequence is Thioredoxin-like protein Clot (139 aa).

The region spanning M1–N136 is the Thioredoxin domain. Catalysis depends on nucleophile residues C49 and C52. A disulfide bond links C49 and C52.

It belongs to the thioredoxin family.

In terms of biological role, probable thiol-disulfide oxidoreductase that may participate in various redox reactions. This Oryza sativa subsp. japonica (Rice) protein is Thioredoxin-like protein Clot.